The following is a 1101-amino-acid chain: MSAKAISEQTGKELLYKFICTTSAIQNRFKYARVTPDTDWARLLQDHPWLLSQNLVVKPDQLIKRRGKLGLVGVNLTLDGVKSWLKPRLGQEATVGKATGFLKNFLIEPFVPHSQAEEFYVCIYATREGDYVLFHHEGGVDVGDVDAKAQKLLVGVDEKLNPEDIKKHLLVHAPEDKKEILASFISGLFNFYEDLYFTYLEINPLVVTKDGVYVLDLAAKVDATADYICKVKWGDIEFPPPFGREAYPEEAYIADLDAKSGASLKLTLLNPKGRIWTMVAGGGASVVYSDTICDLGGVNELANYGEYSGAPSEQQTYDYAKTILSLMTREKHPDGKILIIGGSIANFTNVAATFKGIVRAIRDYQGPLKEHEVTIFVRRGGPNYQEGLRVMGEVGKTTGIPIHVFGTETHMTAIVGMALGHRPIPNQPPTAAHTANFLLNASGSTSTPAPSRTASFSESRADEVAPAKKAKPAMPQDSVPSPRSLQGKSTTLFSRHTKAIVWGMQTRAVQGMLDFDYVCSRDEPSVAAMVYPFTGDHKQKFYWGHKEILIPVFKNMADAMRKHPEVDVLINFASLRSAYDSTMETMNYAQIRTIAIIAEGIPEALTRKLIKKADQKGVTIIGPATVGGIKPGCFKIGNTGGMLDNILASKLYRPGSVAYVSRSGGMSNELNNIISRTTDGVYEGVAIGGDRYPGSTFMDHVLRYQDTPGVKMIVVLGEIGGTEEYKICRGIKEGRLTKPIVCWCIGTCATMFSSEVQFGHAGACANQASETAVAKNQALKEAGVFVPRSFDELGEIIQSVYEDLVANGVIVPAQEVPPPTVPMDYSWARELGLIRKPASFMTSICDERGQELIYAGMPITEVFKEEMGIGGVLGLLWFQKRLPKYSCQFIEMCLMVTADHGPAVSGAHNTIICARAGKDLVSSLTSGLLTIGDRFGGALDAAAKMFSKAFDSGIIPMEFVNKMKKEGKLIMGIGHRVKSINNPDMRVQILKDYVRQHFPATPLLDYALEVEKITTSKKPNLILNVDGLIGVAFVDMLRNCGSFTREEADEYIDIGALNGIFVLGRSMGFIGHYLDQKRLKQGLYRHPWDDISYVLPEHMSM.

The ATP-grasp domain occupies 4–265 (KAISEQTGKE…LDAKSGASLK (262 aa)). 6 residues coordinate ATP: K58, R66, G67, P109, V111, and E118. At Y131 the chain carries Phosphotyrosine. Residue D216 participates in ATP binding. 3 residues coordinate Mg(2+): D257, S260, and A262. At S263 the chain carries Phosphoserine. Positions 309, 346, 348, 364, and 379 each coordinate citrate. Residues 441–457 (ASGSTSTPAPSRTASFS) are compositionally biased toward low complexity. Positions 441-487 (ASGSTSTPAPSRTASFSESRADEVAPAKKAKPAMPQDSVPSPRSLQG) are disordered. Phosphothreonine is present on T447. S451 is subject to Phosphoserine. S455 carries the post-translational modification Phosphoserine; by PKA and PKB/AKT1 or PKB/AKT2 or BCKDK. Phosphoserine occurs at positions 459 and 481. Over residues 478–487 (SVPSPRSLQG) the composition is skewed to polar residues. An N6-acetyllysine; alternate mark is found at K540, K546, and K554. Residues K540, K546, and K554 each participate in a glycyl lysine isopeptide (Lys-Gly) (interchain with G-Cter in ubiquitin); alternate cross-link. T639 carries the phosphothreonine modification. At S663 the chain carries Phosphoserine. Position 682 is a phosphotyrosine (Y682). The Tele-phosphohistidine intermediate role is filled by H760. 779–789 (LKEAGVFVPRS) serves as a coordination point for CoA. The residue at position 839 (S839) is a Phosphoserine. An N6-acetyllysine mark is found at K948, K968, K978, and K1077. Phosphoserine is present on S1100.

The protein in the N-terminal section; belongs to the succinate/malate CoA ligase beta subunit family. This sequence in the C-terminal section; belongs to the succinate/malate CoA ligase alpha subunit family. Homotetramer. It depends on Mg(2+) as a cofactor. Post-translationally, phosphorylated by PKA and GSK3 in a sequential manner; phosphorylation results in activation of its activity. Phosphorylation on Thr-447 and Ser-451 depends on the phosphorylation state of Ser-455. Phosphorylation on Ser-455 is decreased by prior phosphorylation on the other 2 residues. Phosphorylated at Ser-455 by BCKDK and dephosphorylated by protein phosphatase PPM1K. In terms of processing, ISGylated. Acetylated at Lys-540, Lys-546 and Lys-554 by KAT2B/PCAF. Acetylation is promoted by glucose and stabilizes the protein, probably by preventing ubiquitination at the same sites. Acetylation promotes de novo lipid synthesis. Deacetylated by SIRT2. Post-translationally, ubiquitinated at Lys-540, Lys-546 and Lys-554 by the BCR(KLHL25) E3 ubiquitin ligase complex and UBR4, leading to its degradation. Ubiquitination is probably inhibited by acetylation at same site. BCR(KLHL25)-mediated degradation of ACLY promotes fatty acid oxidation and is required for differentiation of inducible regulatory T (iTreg) cells.

The protein localises to the cytoplasm. Its subcellular location is the cytosol. It carries out the reaction oxaloacetate + acetyl-CoA + ADP + phosphate = citrate + ATP + CoA. Its activity is regulated as follows. Phosphorylation results in activation of its activity. Glucose 6-phosphate, fructose 6-phosphate, fructose 2,6-bisphosphate, ribulose 5-phosphate, and fructose 1,6-bisphosphate also act as activators. Catalyzes the cleavage of citrate into oxaloacetate and acetyl-CoA, the latter serving as common substrate in multiple biochemical reactions in protein, carbohydrate and lipid metabolism. The polypeptide is ATP-citrate synthase (ACLY) (Homo sapiens (Human)).